A 351-amino-acid polypeptide reads, in one-letter code: Inactive RHOMBOID-like protein 8 (351 aa).

The next 7 membrane-spanning stretches (helical) occupy residues 48-68 (TWLV…TMGV), 130-150 (WLHS…FVGI), 160-180 (RIAV…VLFV), 183-203 (IPSI…LSAL), 216-236 (ALAI…LPFI), 239-259 (FANI…LFKP), and 294-314 (IICL…ACWG).

This sequence belongs to the peptidase S54 family. As to expression, expressed in pollen mother cell.

Its subcellular location is the golgi apparatus membrane. Its function is as follows. Probable inactive rhomboid-type serine protease. Functionally, probably essential for the meiosis stage-specific callose accumulation and pollen exine formation. This Arabidopsis thaliana (Mouse-ear cress) protein is Inactive RHOMBOID-like protein 8.